The primary structure comprises 213 residues: Thymidylate kinase (213 aa).

10–17 (GLEGAGKT) is an ATP binding site.

This sequence belongs to the thymidylate kinase family.

The catalysed reaction is dTMP + ATP = dTDP + ADP. Phosphorylation of dTMP to form dTDP in both de novo and salvage pathways of dTTP synthesis. The chain is Thymidylate kinase from Escherichia coli O6:H1 (strain CFT073 / ATCC 700928 / UPEC).